The sequence spans 123 residues: Histone H2B (123 aa).

A disordered region spans residues 1–32; that stretch reads MAPKAPGKGAKKAAKSKAPRAPGDRKRKRTRR. Residues 9 to 18 are compositionally biased toward basic residues; it reads GAKKAAKSKA. O-linked (GlcNAc) serine glycosylation is present at S110. A Glycyl lysine isopeptide (Lys-Gly) (interchain with G-Cter in ubiquitin) cross-link involves residue K118.

The protein belongs to the histone H2B family. As to quaternary structure, the nucleosome is a histone octamer containing two molecules each of H2A, H2B, H3 and H4 assembled in one H3-H4 heterotetramer and two H2A-H2B heterodimers. The octamer wraps approximately 147 bp of DNA. Post-translationally, monoubiquitination of Lys-118 gives a specific tag for epigenetic transcriptional activation and is also prerequisite for histone H3 'Lys-4' and 'Lys-79' methylation. In terms of processing, glcNAcylation at Ser-110 promotes monoubiquitination of Lys-118. It fluctuates in response to extracellular glucose, and associates with transcribed genes.

The protein localises to the nucleus. The protein resides in the chromosome. Its function is as follows. Core component of nucleosome. Nucleosomes wrap and compact DNA into chromatin, limiting DNA accessibility to the cellular machineries which require DNA as a template. Histones thereby play a central role in transcription regulation, DNA repair, DNA replication and chromosomal stability. DNA accessibility is regulated via a complex set of post-translational modifications of histones, also called histone code, and nucleosome remodeling. The protein is Histone H2B of Holothuria tubulosa (Tubular sea cucumber).